Here is a 1452-residue protein sequence, read N- to C-terminus: GTPase-activating protein and VPS9 domain-containing protein 1 (1452 aa).

Residues Ser-147–Gly-385 form the Ras-GAP domain. Composition is skewed to polar residues over residues Val-445–Thr-468 and Pro-577–Asn-587. 6 disordered regions span residues Val-445–Ala-471, Ser-571–Gly-611, Leu-735–Thr-816, Arg-885–Gly-912, Ala-929–Arg-974, and Pro-1037–Asp-1063. Residues Ser-588–Glu-601 show a composition bias toward low complexity. Polar residues predominate over residues Ser-755–Asp-774. Basic and acidic residues-rich tracts occupy residues Ile-775–Cys-786 and Arg-885–Ser-897. Low complexity-rich tracts occupy residues Ser-898–Pro-911 and Pro-936–Lys-946. The span at Asp-947–Lys-968 shows a compositional bias: basic and acidic residues. The VPS9 domain occupies Ile-1312–Lys-1452.

The protein belongs to the GAPVD1 family.

It is found in the membrane. The protein localises to the endosome. In terms of biological role, acts both as a GTPase-activating protein (GAP) and a guanine nucleotide exchange factor (GEF), and participates in various processes such as endocytosis, insulin receptor internalization or LC2A4/GLUT4 trafficking. In Xenopus laevis (African clawed frog), this protein is GTPase-activating protein and VPS9 domain-containing protein 1 (gapvd1).